A 581-amino-acid chain; its full sequence is Putative phospholipase B-like 3 (581 aa).

The first 16 residues, 1-16 (MKLLFFLFGLIFAVEQ), serve as a signal peptide directing secretion. Residues N50, N82, N132, N169, N215, N309, N543, N546, and N560 are each glycosylated (N-linked (GlcNAc...) asparagine).

This sequence belongs to the phospholipase B-like family.

It localises to the secreted. Functionally, putative phospholipase. This chain is Putative phospholipase B-like 3, found in Caenorhabditis elegans.